The primary structure comprises 180 residues: ATP-dependent protease subunit HslV (180 aa).

T6 is an active-site residue. Positions 164, 167, and 170 each coordinate Na(+).

This sequence belongs to the peptidase T1B family. HslV subfamily. In terms of assembly, a double ring-shaped homohexamer of HslV is capped on each side by a ring-shaped HslU homohexamer. The assembly of the HslU/HslV complex is dependent on binding of ATP.

It localises to the cytoplasm. The catalysed reaction is ATP-dependent cleavage of peptide bonds with broad specificity.. Its activity is regulated as follows. Allosterically activated by HslU binding. In terms of biological role, protease subunit of a proteasome-like degradation complex believed to be a general protein degrading machinery. This chain is ATP-dependent protease subunit HslV, found in Borrelia recurrentis (strain A1).